The chain runs to 263 residues: MLIEQITQALTAVRQQKPLVVNITNYVVMNNTANALLAIGASPIMAHSKQEMVEMMSFAGALVINIGTLDSVWTPRMSYAVEQANANGKIVVLDPVGCGASSLRTETSREIARLADKLIIRGNASEIIALAGEQAQSKGVDALDSSDAALGAANFLVAEYGASVVISGETDYIVTKGQTVQLNNGHEMMPYVTGMGCTLSALTGAFAAVGDDTGLAAAAVLGVVGEIAAEQARGPGSLQMNLLDELYQLDEETLAKRLKMQVS.

Residue methionine 45 participates in substrate binding. Positions 121 and 167 each coordinate ATP. Position 194 (glycine 194) interacts with substrate.

This sequence belongs to the Thz kinase family. Mg(2+) serves as cofactor.

The catalysed reaction is 5-(2-hydroxyethyl)-4-methylthiazole + ATP = 4-methyl-5-(2-phosphooxyethyl)-thiazole + ADP + H(+). It functions in the pathway cofactor biosynthesis; thiamine diphosphate biosynthesis; 4-methyl-5-(2-phosphoethyl)-thiazole from 5-(2-hydroxyethyl)-4-methylthiazole: step 1/1. In terms of biological role, catalyzes the phosphorylation of the hydroxyl group of 4-methyl-5-beta-hydroxyethylthiazole (THZ). The chain is Hydroxyethylthiazole kinase from Vibrio campbellii (strain ATCC BAA-1116).